We begin with the raw amino-acid sequence, 59 residues long: UPF0391 membrane protein Geob_0344 (59 aa).

2 helical membrane-spanning segments follow: residues 4–24 and 33–53; these read WAAI…TGIA and FLFI…ITAG.

It belongs to the UPF0391 family.

The protein resides in the cell membrane. The chain is UPF0391 membrane protein Geob_0344 from Geotalea daltonii (strain DSM 22248 / JCM 15807 / FRC-32) (Geobacter daltonii).